Reading from the N-terminus, the 436-residue chain is Trigger factor (436 aa).

A PPIase FKBP-type domain is found at 163–248 (GDRVTIDFEG…VKKIEAAHLP (86 aa)).

The protein belongs to the FKBP-type PPIase family. Tig subfamily.

It localises to the cytoplasm. It catalyses the reaction [protein]-peptidylproline (omega=180) = [protein]-peptidylproline (omega=0). In terms of biological role, involved in protein export. Acts as a chaperone by maintaining the newly synthesized protein in an open conformation. Functions as a peptidyl-prolyl cis-trans isomerase. In Polaromonas naphthalenivorans (strain CJ2), this protein is Trigger factor.